A 269-amino-acid polypeptide reads, in one-letter code: Putative pyruvate, phosphate dikinase regulatory protein (269 aa).

ADP is bound at residue 151 to 158; sequence GISRTSKT.

Belongs to the pyruvate, phosphate/water dikinase regulatory protein family. PDRP subfamily.

It carries out the reaction N(tele)-phospho-L-histidyl/L-threonyl-[pyruvate, phosphate dikinase] + ADP = N(tele)-phospho-L-histidyl/O-phospho-L-threonyl-[pyruvate, phosphate dikinase] + AMP + H(+). It catalyses the reaction N(tele)-phospho-L-histidyl/O-phospho-L-threonyl-[pyruvate, phosphate dikinase] + phosphate + H(+) = N(tele)-phospho-L-histidyl/L-threonyl-[pyruvate, phosphate dikinase] + diphosphate. In terms of biological role, bifunctional serine/threonine kinase and phosphorylase involved in the regulation of the pyruvate, phosphate dikinase (PPDK) by catalyzing its phosphorylation/dephosphorylation. The protein is Putative pyruvate, phosphate dikinase regulatory protein of Staphylococcus aureus.